The primary structure comprises 480 residues: V-type ATP synthase beta chain 2 (480 aa).

The protein belongs to the ATPase alpha/beta chains family.

Produces ATP from ADP in the presence of a proton gradient across the membrane. The V-type beta chain is a regulatory subunit. This is V-type ATP synthase beta chain 2 (atpB2) from Treponema pallidum (strain Nichols).